A 137-amino-acid polypeptide reads, in one-letter code: Large ribosomal subunit protein uL22 (137 aa).

Belongs to the universal ribosomal protein uL22 family. In terms of assembly, part of the 50S ribosomal subunit.

Functionally, this protein binds specifically to 23S rRNA; its binding is stimulated by other ribosomal proteins, e.g. L4, L17, and L20. It is important during the early stages of 50S assembly. It makes multiple contacts with different domains of the 23S rRNA in the assembled 50S subunit and ribosome. Its function is as follows. The globular domain of the protein is located near the polypeptide exit tunnel on the outside of the subunit, while an extended beta-hairpin is found that lines the wall of the exit tunnel in the center of the 70S ribosome. The chain is Large ribosomal subunit protein uL22 from Flavobacterium psychrophilum (strain ATCC 49511 / DSM 21280 / CIP 103535 / JIP02/86).